The chain runs to 220 residues: Iron-sulfur cluster repair protein YtfE (220 aa).

Belongs to the RIC family. YtfE subfamily. Homodimer.

It localises to the cytoplasm. In terms of biological role, di-iron-containing protein involved in the repair of iron-sulfur clusters damaged by oxidative and nitrosative stress conditions. In Citrobacter koseri (strain ATCC BAA-895 / CDC 4225-83 / SGSC4696), this protein is Iron-sulfur cluster repair protein YtfE.